The sequence spans 335 residues: Heat-inducible transcription repressor HrcA (335 aa).

It belongs to the HrcA family.

Negative regulator of class I heat shock genes (grpE-dnaK-dnaJ and groELS operons). Prevents heat-shock induction of these operons. This is Heat-inducible transcription repressor HrcA from Mesomycoplasma hyopneumoniae (strain 232) (Mycoplasma hyopneumoniae).